A 970-amino-acid chain; its full sequence is Type III restriction-modification enzyme EcoP15I Res subunit (970 aa).

A helicase-like domain region spans residues 75–540 (AKSNIIDVSM…EVGRGLRLPV (466 aa)). T91, G122, F126, and D226 together coordinate AMP. The endonuclease domain stretch occupies residues 894 to 918 (TYSPDFAYVVKTAEGDYLNFIIETK).

This sequence belongs to the type III restriction-modification system Res protein family. In terms of assembly, a heterotetramer with stoichiometry Res(2)Mod(2). A heterotrimer with stoichiometry Res(1)Mod(2). The cofactor is Mg(2+). Requires S-adenosyl-L-methionine as cofactor.

It catalyses the reaction Endonucleolytic cleavage of DNA to give specific double-stranded fragments with terminal 5'-phosphates.. A type III restriction enzyme that recognizes 2 inversely oriented double-stranded sequences 5'-CAGCAG-3' and cleaves DNA 25-27 base pairs downstream of one site. DNA restriction requires both the Res and Mod subunits. DNA topology affects its action; relaxed and negatively supercoiled DNA are digested but positively supercoiled DNA is not a good substrate. Interacts with DNA approximately one half-turn downstream of the recognition site. After binding to one recognition site undergoes random one-dimensional diffusion along DNA until it collides with a stationary enzyme bound to the second DNA site, which is when DNA cleavage occurs. This is Type III restriction-modification enzyme EcoP15I Res subunit from Escherichia coli.